A 242-amino-acid chain; its full sequence is Glutamine transport ATP-binding protein GlnQ (242 aa).

Residues 2–236 form the ABC transporter domain; sequence IYFHQVNKYY…PKEERAKVFL (235 aa). Residue 34 to 41 coordinates ATP; sequence GPSGSGKS.

It belongs to the ABC transporter superfamily.

It is found in the cell membrane. Functionally, part of the binding-protein-dependent transport system for glutamine. Probably responsible for energy coupling to the transport system. The sequence is that of Glutamine transport ATP-binding protein GlnQ (glnQ) from Geobacillus stearothermophilus (Bacillus stearothermophilus).